The chain runs to 2512 residues: RNA replication protein (2512 aa).

Residues Arg156 to Leu367 enclose the Alphavirus-like MT domain. Positions Leu683–Cys803 constitute an OTU domain. In terms of domain architecture, (+)RNA virus helicase ATP-binding spans Ala1520–Leu1696. A (+)RNA virus helicase C-terminal domain is found at Ala1697–Thr1874. In terms of domain architecture, RdRp catalytic spans Phe2265–Asp2378.

The enzyme catalyses ATP + H2O = ADP + phosphate + H(+). It catalyses the reaction RNA(n) + a ribonucleoside 5'-triphosphate = RNA(n+1) + diphosphate. Functionally, RNA replication. The central part of this protein possibly functions as an ATP-binding helicase (Potential). This Citrus leprosis virus C (isolate Citrus sinesis/Brazil/Cordeiropolis/2003) (CiLV-C) protein is RNA replication protein.